The primary structure comprises 1004 residues: Kinesin-like protein KIN-7I (1004 aa).

The 321-residue stretch at 6-326 (KILVSVRVRP…LLFATCAKEV (321 aa)) folds into the Kinesin motor domain. Position 89-96 (89-96 (GQTSSGKT)) interacts with ATP. Coiled-coil stretches lie at residues 335 to 402 (VVSE…AQSR), 517 to 576 (KKEY…QKQS), and 634 to 661 (SVEK…DQSE). Disordered stretches follow at residues 567–599 (EQSV…KSLP), 628–671 (SQQT…PEDE), and 802–830 (TMQH…GEKT). Basic and acidic residues-rich tracts occupy residues 569–582 (SVEK…KEEM) and 634–652 (SVEK…EDLK). The segment covering 653 to 663 (QNLSMDQSEQL) has biased composition (polar residues). K881 participates in a covalent cross-link: Glycyl lysine isopeptide (Lys-Gly) (interchain with G-Cter in ubiquitin).

This sequence belongs to the TRAFAC class myosin-kinesin ATPase superfamily. Kinesin family. KIN-7 subfamily.

This chain is Kinesin-like protein KIN-7I, found in Arabidopsis thaliana (Mouse-ear cress).